The sequence spans 313 residues: MEKRKIILDCDPGHDDAIAIMMAAKHPAIDLLGITIVAGNQTLDKTLINGLNVCQKLEINVPVYAGMPQPIMRQQIVADNIHGDTGLDGPVFEPLTRQAESTHAVKYIIDTLMASDGDITLVPVGPLSNIAVAMRMQPAILPKIREIVLMGGAYGTGNFTPSAEFNIFADPEAARVVFTSGVPLVMMGLDLTNQTVCTPDVIARMERAGGPAGELFSDIMNFTLKTQFENYGLAGGPVHDATCIGYLINPDGIKTQEMYVEVDVNSGPCYGRTVCDELGVLGKPANTKVGITIDSDWFWGLVEECVRGYIKTH.

The Proton acceptor role is filled by Asp-11. Asp-11, Asp-16, and Val-124 together coordinate Ca(2+). 2 residues coordinate substrate: Gln-227 and His-239. Asp-240 lines the Ca(2+) pocket.

This sequence belongs to the IUNH family. RihB subfamily. As to quaternary structure, homotetramer. Ca(2+) serves as cofactor.

It carries out the reaction a pyrimidine ribonucleoside + H2O = a pyrimidine nucleobase + D-ribose. Hydrolyzes cytidine or uridine to ribose and cytosine or uracil, respectively. Has a clear preference for cytidine over uridine. Strictly specific for ribonucleosides. The chain is Pyrimidine-specific ribonucleoside hydrolase RihB from Escherichia coli O157:H7.